Consider the following 239-residue polypeptide: MNRPSGRAADQLRPIRITRHYTKHAEGSVLVEFGDTKVICTVSAESGVPRFLKGQGQGWLTAEYGMLPRSTGERNQREASRGKQGGRTLEIQRLIGRSLRAALDLSKLGENTLYIDCDVIQADGGTRTASITGATVALIDALAVLKKRGALKGNPLKQMVAAVSVGIYQGVPVLDLDYLEDSAAETDLNVVMTDAGGFIEVQGTAEGAPFRPAELNAMLELAQQGMQELFELQRAALAE.

Residues Arg87 and 125–127 contribute to the phosphate site; that span reads GTR.

This sequence belongs to the RNase PH family. Homohexameric ring arranged as a trimer of dimers.

The catalysed reaction is tRNA(n+1) + phosphate = tRNA(n) + a ribonucleoside 5'-diphosphate. Functionally, phosphorolytic 3'-5' exoribonuclease that plays an important role in tRNA 3'-end maturation. Removes nucleotide residues following the 3'-CCA terminus of tRNAs; can also add nucleotides to the ends of RNA molecules by using nucleoside diphosphates as substrates, but this may not be physiologically important. Probably plays a role in initiation of 16S rRNA degradation (leading to ribosome degradation) during starvation. The chain is Ribonuclease PH from Pseudomonas aeruginosa (strain LESB58).